The primary structure comprises 124 residues: MTTSSYFLLVALGLLLYVFQSSFGGEHVCWLGDPNHPQGICGPQVADIVEIRCEEKEAEQGGANNARANTGRTSSLMKRRGFLSLLKKRGKRDEGSPLQRSGRGIVCECCKHHCTKEEFTEYCH.

The first 24 residues, 1–24 (MTTSSYFLLVALGLLLYVFQSSFG), serve as a signal peptide directing secretion. Cystine bridges form between cysteine 29–cysteine 107, cysteine 41–cysteine 110, cysteine 53–cysteine 123, and cysteine 109–cysteine 114. Proline 34 carries the 4-hydroxyproline; partial modification. The propeptide at 59 to 92 (EQGGANNARANTGRTSSLMKRRGFLSLLKKRGKR) is c peptide. At glutamate 118 the chain carries 4-carboxyglutamate; partial.

This sequence belongs to the insulin family. As to quaternary structure, heterodimer of A and B chains; disulfide-linked. As to expression, expressed by the venom gland.

It localises to the secreted. Functionally, this venom insulin facilitates prey capture by rapidly inducing hypoglycemic shock. Intraperitoneal injection of this peptide into zebrafish lowers blood glucose with the same potency than human insulin. In vivo, when applied to water, this peptide reduces overall locomotor activity of zebrafish larvae, observed as a significant decrease in the percentage of time spent swimming and movement frequency. This Conus textile (Cloth-of-gold cone) protein is Con-Ins Tx1.